Reading from the N-terminus, the 447-residue chain is Tubulin beta-1 chain (447 aa).

GTP contacts are provided by Gln-11, Glu-69, Ser-138, Gly-142, Thr-143, Gly-144, Asn-204, and Asn-226. Position 69 (Glu-69) interacts with Mg(2+). Residues 411 to 427 (AESNMNDLVSEYQQYQD) are compositionally biased toward polar residues. The disordered stretch occupies residues 411-447 (AESNMNDLVSEYQQYQDATADEEGDYEDEEEQVPEDE). Residues 429–447 (TADEEGDYEDEEEQVPEDE) show a composition bias toward acidic residues.

This sequence belongs to the tubulin family. As to quaternary structure, dimer of alpha and beta chains. A typical microtubule is a hollow water-filled tube with an outer diameter of 25 nm and an inner diameter of 15 nM. Alpha-beta heterodimers associate head-to-tail to form protofilaments running lengthwise along the microtubule wall with the beta-tubulin subunit facing the microtubule plus end conferring a structural polarity. Microtubules usually have 13 protofilaments but different protofilament numbers can be found in some organisms and specialized cells. The cofactor is Mg(2+). As to expression, expressed in leaf sheaths.

It is found in the cytoplasm. It localises to the cytoskeleton. In terms of biological role, tubulin is the major constituent of microtubules, a cylinder consisting of laterally associated linear protofilaments composed of alpha- and beta-tubulin heterodimers. Microtubules grow by the addition of GTP-tubulin dimers to the microtubule end, where a stabilizing cap forms. Below the cap, tubulin dimers are in GDP-bound state, owing to GTPase activity of alpha-tubulin. This chain is Tubulin beta-1 chain (TUBB1), found in Oryza sativa subsp. japonica (Rice).